The primary structure comprises 224 residues: 2-C-methyl-D-erythritol 4-phosphate cytidylyltransferase (224 aa).

The protein belongs to the IspD/TarI cytidylyltransferase family. IspD subfamily.

It carries out the reaction 2-C-methyl-D-erythritol 4-phosphate + CTP + H(+) = 4-CDP-2-C-methyl-D-erythritol + diphosphate. Its pathway is isoprenoid biosynthesis; isopentenyl diphosphate biosynthesis via DXP pathway; isopentenyl diphosphate from 1-deoxy-D-xylulose 5-phosphate: step 2/6. In terms of biological role, catalyzes the formation of 4-diphosphocytidyl-2-C-methyl-D-erythritol from CTP and 2-C-methyl-D-erythritol 4-phosphate (MEP). This Saccharopolyspora erythraea (strain ATCC 11635 / DSM 40517 / JCM 4748 / NBRC 13426 / NCIMB 8594 / NRRL 2338) protein is 2-C-methyl-D-erythritol 4-phosphate cytidylyltransferase.